Here is a 458-residue protein sequence, read N- to C-terminus: Argininosuccinate lyase (458 aa).

The protein belongs to the lyase 1 family. Argininosuccinate lyase subfamily.

The protein localises to the cytoplasm. It catalyses the reaction 2-(N(omega)-L-arginino)succinate = fumarate + L-arginine. Its pathway is amino-acid biosynthesis; L-arginine biosynthesis; L-arginine from L-ornithine and carbamoyl phosphate: step 3/3. The protein is Argininosuccinate lyase of Haemophilus ducreyi (strain 35000HP / ATCC 700724).